Here is an 82-residue protein sequence, read N- to C-terminus: RNA-binding protein Hfq (82 aa).

A Sm domain is found at 11–71 (DTFLNSVRKS…ISTIMPAQPV (61 aa)).

This sequence belongs to the Hfq family. As to quaternary structure, homohexamer.

RNA chaperone that binds small regulatory RNA (sRNAs) and mRNAs to facilitate mRNA translational regulation in response to envelope stress, environmental stress and changes in metabolite concentrations. Also binds with high specificity to tRNAs. The polypeptide is RNA-binding protein Hfq (Caulobacter vibrioides (strain ATCC 19089 / CIP 103742 / CB 15) (Caulobacter crescentus)).